Consider the following 251-residue polypeptide: Triosephosphate isomerase (251 aa).

9–11 contacts substrate; sequence NWK. His95 functions as the Electrophile in the catalytic mechanism. The active-site Proton acceptor is Glu167. Residues Gly173, Ser212, and 233 to 234 contribute to the substrate site; that span reads GG.

The protein belongs to the triosephosphate isomerase family. Homodimer.

The protein localises to the cytoplasm. The enzyme catalyses D-glyceraldehyde 3-phosphate = dihydroxyacetone phosphate. The protein operates within carbohydrate biosynthesis; gluconeogenesis. It participates in carbohydrate degradation; glycolysis; D-glyceraldehyde 3-phosphate from glycerone phosphate: step 1/1. In terms of biological role, involved in the gluconeogenesis. Catalyzes stereospecifically the conversion of dihydroxyacetone phosphate (DHAP) to D-glyceraldehyde-3-phosphate (G3P). This is Triosephosphate isomerase from Pseudomonas savastanoi pv. phaseolicola (strain 1448A / Race 6) (Pseudomonas syringae pv. phaseolicola (strain 1448A / Race 6)).